The chain runs to 154 residues: Protein X (154 aa).

The segment at 28-48 (RPLPGPLGTLPPASPPAVPTD) is disordered. Residues 68 to 117 (PCALRFTSARRMETTVNAHGNLPKVLHKRTLGLSAMSTTDLEAYFKDCVF) form a mitochondrial targeting sequence region.

This sequence belongs to the orthohepadnavirus protein X family. May form homodimer. May interact with host CEBPA, CFLAR, CREB1, DDB1, E4F1, HBXIP, HSPD1/HSP60, NFKBIA, POLR2E and SMAD4. Interacts with host SMC5-SMC6 complex and induces its degradation. Interacts with host TRPC4AP; leading to prevent ubiquitination of TRPC4AP. Interacts with host PLSCR1; this interaction promotes ubiquitination and degradation of HBx and impairs HBx-mediated cell proliferation. In terms of processing, a fraction may be phosphorylated in insect cells and HepG2 cells, a human hepatoblastoma cell line. Phosphorylated in vitro by host protein kinase C or mitogen-activated protein kinase. N-acetylated in insect cells.

It is found in the host cytoplasm. The protein resides in the host nucleus. It localises to the host mitochondrion. In terms of biological role, multifunctional protein that plays a role in silencing host antiviral defenses and promoting viral transcription. Does not seem to be essential for HBV infection. May be directly involved in development of cirrhosis and liver cancer (hepatocellular carcinoma). Most of cytosolic activities involve modulation of cytosolic calcium. The effect on apoptosis is controversial depending on the cell types in which the studies have been conducted. May induce apoptosis by localizing in mitochondria and causing loss of mitochondrial membrane potential. May also modulate apoptosis by binding host CFLAR, a key regulator of the death-inducing signaling complex (DISC). Promotes viral transcription by using the host E3 ubiquitin ligase DDB1 to target the SMC5-SMC6 complex to proteasomal degradation. This host complex would otherwise bind to viral episomal DNA, and prevents its transcription. Moderately stimulates transcription of many different viral and cellular transcription elements. Promoters and enhancers stimulated by HBx contain DNA binding sites for NF-kappa-B, AP-1, AP-2, c-EBP, ATF/CREB, or the calcium-activated factor NF-AT. This Hepatitis B virus genotype B2 subtype adw (isolate China/patient4/1996) (HBV-B) protein is Protein X.